The sequence spans 143 residues: Histone H2AX (143 aa).

The interval 1 to 22 (MSGRGKTGGKARAKAKSRSSRA) is disordered. The residue at position 2 (Ser2) is an N-acetylserine. Phosphoserine is present on Ser2. Residues Lys6 and Lys10 each carry the N6-acetyllysine modification. Residues 7–19 (TGGKARAKAKSRS) show a composition bias toward basic residues. At Lys10 the chain carries N6-lactoyllysine; alternate. Residues Lys14 and Lys16 each participate in a glycyl lysine isopeptide (Lys-Gly) (interchain with G-Cter in ubiquitin) cross-link. At Lys37 the chain carries N6-acetyllysine. Residue Lys120 forms a Glycyl lysine isopeptide (Lys-Gly) (interchain with G-Cter in ubiquitin) linkage. The tract at residues 121-143 (TSATVGPKAPSGGKKATQASQEY) is disordered. Ser122 bears the Phosphoserine mark. Glycyl lysine isopeptide (Lys-Gly) (interchain with G-Cter in SUMO2) cross-links involve residues Lys128 and Lys135. Ser140 is modified (phosphoserine; by ATM, ATR and PRKDC). Residues 140–141 (SQ) carry the [ST]-Q motif motif. Phosphotyrosine; by WSTF is present on Tyr143.

Belongs to the histone H2A family. In terms of assembly, the nucleosome is a histone octamer containing two molecules each of H2A, H2B, H3 and H4 assembled in one H3-H4 heterotetramer and two H2A-H2B heterodimers. The octamer wraps approximately 147 bp of DNA. Interacts with numerous proteins required for DNA damage signaling and repair when phosphorylated on Ser-140. These include MDC1, TP53BP1, BRCA1 and the MRN complex, composed of MRE11, RAD50, and NBN. Interaction with the MRN complex is mediated at least in part by NBN. Also interacts with DHX9/NDHII when phosphorylated on Ser-140 and MCPH1 when phosphorylated at Ser-140 or Tyr-143. Interacts with ARRB2; the interaction is detected in the nucleus upon OR1D2 stimulation. Interacts with WRAP53/TCAB1. Interacts with HDGFL2. Interacts with DNA damage up-regulated protein DDUP. Forms a complex with DDUP and RAD18 following DDUP phosphorylation. (Microbial infection) Interacts with Epstein-Barr virus protein EBNA6. In terms of processing, phosphorylated by VRK1. Phosphorylated on Ser-140 (to form gamma-H2AX or H2AX139ph) in response to DNA double strand breaks (DSBs) generated by exogenous genotoxic agents and by stalled replication forks, and may also occur during meiotic recombination events and immunoglobulin class switching in lymphocytes. Phosphorylation can extend up to several thousand nucleosomes from the actual site of the DSB and may mark the surrounding chromatin for recruitment of proteins required for DNA damage signaling and repair. Widespread phosphorylation may also serve to amplify the damage signal or aid repair of persistent lesions. Phosphorylation of Ser-140 (H2AX139ph) in response to ionizing radiation is mediated by both ATM and PRKDC while defects in DNA replication induce Ser-140 phosphorylation (H2AX139ph) subsequent to activation of ATR and PRKDC. Dephosphorylation of Ser-140 by PP2A is required for DNA DSB repair. In meiosis, Ser-140 phosphorylation (H2AX139ph) may occur at synaptonemal complexes during leptotene as an ATM-dependent response to the formation of programmed DSBs by SPO11. Ser-140 phosphorylation (H2AX139ph) may subsequently occurs at unsynapsed regions of both autosomes and the XY bivalent during zygotene, downstream of ATR and BRCA1 activation. Ser-140 phosphorylation (H2AX139ph) may also be required for transcriptional repression of unsynapsed chromatin and meiotic sex chromosome inactivation (MSCI), whereby the X and Y chromosomes condense in pachytene to form the heterochromatic XY-body. During immunoglobulin class switch recombination in lymphocytes, Ser-140 phosphorylation (H2AX139ph) may occur at sites of DNA-recombination subsequent to activation of the activation-induced cytidine deaminase AICDA. Phosphorylation at Tyr-143 (H2AXY142ph) by BAZ1B/WSTF determines the relative recruitment of either DNA repair or pro-apoptotic factors. Phosphorylation at Tyr-143 (H2AXY142ph) favors the recruitment of APBB1/FE65 and pro-apoptosis factors such as MAPK8/JNK1, triggering apoptosis. In contrast, dephosphorylation of Tyr-143 by EYA proteins (EYA1, EYA2, EYA3 or EYA4) favors the recruitment of MDC1-containing DNA repair complexes to the tail of phosphorylated Ser-140 (H2AX139ph). Post-translationally, monoubiquitination of Lys-120 (H2AXK119ub) by RING1 and RNF2/RING2 complex gives a specific tag for epigenetic transcriptional repression. Following DNA double-strand breaks (DSBs), it is ubiquitinated through 'Lys-63' linkage of ubiquitin moieties by the E2 ligase UBE2N and the E3 ligases RNF8 and RNF168, leading to the recruitment of repair proteins to sites of DNA damage. Ubiquitination at Lys-14 and Lys-16 (H2AK13Ub and H2AK15Ub, respectively) in response to DNA damage is initiated by RNF168 that mediates monoubiquitination at these 2 sites, and 'Lys-63'-linked ubiquitin are then conjugated to monoubiquitin; RNF8 is able to extend 'Lys-63'-linked ubiquitin chains in vitro. H2AK119Ub and ionizing radiation-induced 'Lys-63'-linked ubiquitination (H2AK13Ub and H2AK15Ub) are distinct events. Acetylation at Lys-6 (H2AXK5ac) by KAT5 component of the NuA4 histone acetyltransferase complex promotes NBN/NBS1 assembly at the sites of DNA damage. Acetylation at Lys-37 increases in S and G2 phases. This modification has been proposed to play a role in DNA double-strand break repair.

It is found in the nucleus. It localises to the chromosome. Functionally, variant histone H2A which replaces conventional H2A in a subset of nucleosomes. Nucleosomes wrap and compact DNA into chromatin, limiting DNA accessibility to the cellular machineries which require DNA as a template. Histones thereby play a central role in transcription regulation, DNA repair, DNA replication and chromosomal stability. DNA accessibility is regulated via a complex set of post-translational modifications of histones, also called histone code, and nucleosome remodeling. Required for checkpoint-mediated arrest of cell cycle progression in response to low doses of ionizing radiation and for efficient repair of DNA double strand breaks (DSBs) specifically when modified by C-terminal phosphorylation. The sequence is that of Histone H2AX from Homo sapiens (Human).